The primary structure comprises 501 residues: NAD(P)H-quinone oxidoreductase chain 4, chloroplastic (501 aa).

The next 14 membrane-spanning stretches (helical) occupy residues 4 to 24, 35 to 55, 87 to 107, 113 to 133, 134 to 154, 167 to 187, 211 to 231, 242 to 262, 274 to 294, 310 to 330, 331 to 351, 386 to 406, 416 to 436, and 464 to 484; these read FPWLTTIVLLPVFAGCVIPFF, YTLGVCLLEFLLITYVFCYYF, IGLILLTGFITTLATLAAWPV, LFYFLMLAMYSGQVGLFASQD, ILLFFFMWELELIPVYLLLCI, FILYTAGGSIFILMGALTMGF, IILYLGFFIAYAVKLPIFPLH, HYSTCMLLAGILLKMGGYGLI, SIFAPWIVAVGAIQIVYAALI, ISHMGFVLIGIGSMTDVGLNG, AILQMVSHGLIGAALFFLAGI, LALPGMSGFVAEFLVFLGIVV, ILVTIIEAIGIILTPIYLLSM, and IFILVCLIFPIVGIGLYPNSV.

The protein belongs to the complex I subunit 4 family.

The protein resides in the plastid. Its subcellular location is the chloroplast thylakoid membrane. It carries out the reaction a plastoquinone + NADH + (n+1) H(+)(in) = a plastoquinol + NAD(+) + n H(+)(out). It catalyses the reaction a plastoquinone + NADPH + (n+1) H(+)(in) = a plastoquinol + NADP(+) + n H(+)(out). The polypeptide is NAD(P)H-quinone oxidoreductase chain 4, chloroplastic (Physcomitrium patens (Spreading-leaved earth moss)).